A 231-amino-acid polypeptide reads, in one-letter code: Enolase-phosphatase E1 (231 aa).

This sequence belongs to the HAD-like hydrolase superfamily. MasA/MtnC family. Monomer. Mg(2+) serves as cofactor.

It catalyses the reaction 5-methylsulfanyl-2,3-dioxopentyl phosphate + H2O = 1,2-dihydroxy-5-(methylsulfanyl)pent-1-en-3-one + phosphate. Its pathway is amino-acid biosynthesis; L-methionine biosynthesis via salvage pathway; L-methionine from S-methyl-5-thio-alpha-D-ribose 1-phosphate: step 3/6. The protein operates within amino-acid biosynthesis; L-methionine biosynthesis via salvage pathway; L-methionine from S-methyl-5-thio-alpha-D-ribose 1-phosphate: step 4/6. In terms of biological role, bifunctional enzyme that catalyzes the enolization of 2,3-diketo-5-methylthiopentyl-1-phosphate (DK-MTP-1-P) into the intermediate 2-hydroxy-3-keto-5-methylthiopentenyl-1-phosphate (HK-MTPenyl-1-P), which is then dephosphorylated to form the acireductone 1,2-dihydroxy-3-keto-5-methylthiopentene (DHK-MTPene). The polypeptide is Enolase-phosphatase E1 (Granulibacter bethesdensis (strain ATCC BAA-1260 / CGDNIH1)).